Here is a 619-residue protein sequence, read N- to C-terminus: DNA mismatch repair protein MutL (619 aa).

This sequence belongs to the DNA mismatch repair MutL/HexB family.

In terms of biological role, this protein is involved in the repair of mismatches in DNA. It is required for dam-dependent methyl-directed DNA mismatch repair. May act as a 'molecular matchmaker', a protein that promotes the formation of a stable complex between two or more DNA-binding proteins in an ATP-dependent manner without itself being part of a final effector complex. The polypeptide is DNA mismatch repair protein MutL (Xylella fastidiosa (strain 9a5c)).